A 66-amino-acid chain; its full sequence is Large ribosomal subunit protein bL33c (66 aa).

It belongs to the bacterial ribosomal protein bL33 family.

The protein resides in the plastid. It is found in the chloroplast. The polypeptide is Large ribosomal subunit protein bL33c (Cucumis sativus (Cucumber)).